A 319-amino-acid chain; its full sequence is Acetyl-coenzyme A carboxylase carboxyl transferase subunit alpha (319 aa).

A CoA carboxyltransferase C-terminal domain is found at arginine 39–glutamate 293.

It belongs to the AccA family. In terms of assembly, acetyl-CoA carboxylase is a heterohexamer composed of biotin carboxyl carrier protein (AccB), biotin carboxylase (AccC) and two subunits each of ACCase subunit alpha (AccA) and ACCase subunit beta (AccD).

Its subcellular location is the cytoplasm. The enzyme catalyses N(6)-carboxybiotinyl-L-lysyl-[protein] + acetyl-CoA = N(6)-biotinyl-L-lysyl-[protein] + malonyl-CoA. It functions in the pathway lipid metabolism; malonyl-CoA biosynthesis; malonyl-CoA from acetyl-CoA: step 1/1. Functionally, component of the acetyl coenzyme A carboxylase (ACC) complex. First, biotin carboxylase catalyzes the carboxylation of biotin on its carrier protein (BCCP) and then the CO(2) group is transferred by the carboxyltransferase to acetyl-CoA to form malonyl-CoA. The sequence is that of Acetyl-coenzyme A carboxylase carboxyl transferase subunit alpha from Neisseria meningitidis serogroup A / serotype 4A (strain DSM 15465 / Z2491).